Here is a 357-residue protein sequence, read N- to C-terminus: MTRVIVVDDSAFFRSSITKMLTQDSEIEVIGVAKDGIEGLEKIKNLKPDVVTMDIEMPKLDGISTLKIIMDEMPLPVIMVSSLTKEGAEATLKALEFGAVDFIPKYPGNSLASMDLAALSSDLCTKVKAVAARAKRFPLKRIRKDKVPIISPVKKDFFTSPNHSERSRRDIIAIGVSTGGPPAVQKVLSELPETFPACILIAQHMPAAFTKPFAERLNSMCKISVKEAEHGNPIKNGIAYVCPGGRHLRLDLKGALPQISVVSEPSTALYKPSANVLMESVGKSMGGRSVGVIMTGMGSDGVEGMRVLKSKGGFVIAQSEASCVVYGMPKAIVDGGLADEVVDLDNIAERVASALYK.

Residues 3–120 (RVIVVDDSAF…LASMDLAALS (118 aa)) enclose the Response regulatory domain. Asp-54 is subject to 4-aspartylphosphate. The CheB-type methylesterase domain occupies 165 to 357 (ERSRRDIIAI…AERVASALYK (193 aa)). Active-site residues include Ser-177, His-204, and Asp-300.

This sequence belongs to the CheB family. In terms of processing, phosphorylated by CheA. Phosphorylation of the N-terminal regulatory domain activates the methylesterase activity.

The protein localises to the cytoplasm. It carries out the reaction [protein]-L-glutamate 5-O-methyl ester + H2O = L-glutamyl-[protein] + methanol + H(+). The enzyme catalyses L-glutaminyl-[protein] + H2O = L-glutamyl-[protein] + NH4(+). In terms of biological role, involved in chemotaxis. Part of a chemotaxis signal transduction system that modulates chemotaxis in response to various stimuli. Catalyzes the demethylation of specific methylglutamate residues introduced into the chemoreceptors (methyl-accepting chemotaxis proteins or MCP) by CheR. Also mediates the irreversible deamidation of specific glutamine residues to glutamic acid. The polypeptide is Protein-glutamate methylesterase/protein-glutamine glutaminase (Lawsonia intracellularis (strain PHE/MN1-00)).